An 81-amino-acid polypeptide reads, in one-letter code: Photosystem I iron-sulfur center (81 aa).

2 consecutive 4Fe-4S ferredoxin-type domains span residues 2–31 (SHAVKIYDTCIGCTQCVRACPLDVLEMVPW) and 39–68 (IASSPRTEDCVGCKRCETACPTDFLSIRVY). Residues Cys11, Cys14, Cys17, Cys21, Cys48, Cys51, Cys54, and Cys58 each contribute to the [4Fe-4S] cluster site.

The cyanobacterial PSI reaction center is composed of one copy each of PsaA,B,C,D,E,F,I,J,K,L,M and X, and forms trimeric complexes. The cofactor is [4Fe-4S] cluster.

The protein resides in the cellular thylakoid membrane. The catalysed reaction is reduced [plastocyanin] + hnu + oxidized [2Fe-2S]-[ferredoxin] = oxidized [plastocyanin] + reduced [2Fe-2S]-[ferredoxin]. Its function is as follows. Apoprotein for the two 4Fe-4S centers FA and FB of photosystem I (PSI); essential for photochemical activity. FB is the terminal electron acceptor of PSI, donating electrons to ferredoxin. The C-terminus interacts with PsaA/B/D and helps assemble the protein into the PSI complex. Required for binding of PsaD and PsaE to PSI. PSI is a plastocyanin/cytochrome c6-ferredoxin oxidoreductase, converting photonic excitation into a charge separation, which transfers an electron from the donor P700 chlorophyll pair to the spectroscopically characterized acceptors A0, A1, FX, FA and FB in turn. In Prochlorococcus marinus (strain MIT 9312), this protein is Photosystem I iron-sulfur center.